A 264-amino-acid chain; its full sequence is tRNA pseudouridine synthase A (264 aa).

The Nucleophile role is filled by Asp-51. Position 109 (Tyr-109) interacts with substrate.

It belongs to the tRNA pseudouridine synthase TruA family. In terms of assembly, homodimer.

It catalyses the reaction uridine(38/39/40) in tRNA = pseudouridine(38/39/40) in tRNA. Functionally, formation of pseudouridine at positions 38, 39 and 40 in the anticodon stem and loop of transfer RNAs. This is tRNA pseudouridine synthase A from Actinobacillus succinogenes (strain ATCC 55618 / DSM 22257 / CCUG 43843 / 130Z).